Reading from the N-terminus, the 92-residue chain is Small ribosomal subunit protein uS19c (92 aa).

This sequence belongs to the universal ribosomal protein uS19 family.

It is found in the plastid. The protein localises to the chloroplast. In terms of biological role, protein S19 forms a complex with S13 that binds strongly to the 16S ribosomal RNA. The chain is Small ribosomal subunit protein uS19c from Cicer arietinum (Chickpea).